The primary structure comprises 360 residues: Protein RecA (360 aa).

Residue 77–84 (GPESSGKT) participates in ATP binding.

It belongs to the RecA family.

The protein resides in the cytoplasm. Its function is as follows. Can catalyze the hydrolysis of ATP in the presence of single-stranded DNA, the ATP-dependent uptake of single-stranded DNA by duplex DNA, and the ATP-dependent hybridization of homologous single-stranded DNAs. It interacts with LexA causing its activation and leading to its autocatalytic cleavage. This is Protein RecA from Chelativorans sp. (strain BNC1).